A 495-amino-acid polypeptide reads, in one-letter code: Trimethylamine methyltransferase MttB2 (495 aa).

Pyrrolysine 334 is a non-standard amino acid (pyrrolysine).

The protein belongs to the trimethylamine methyltransferase family. As to quaternary structure, can form a complex with MttC.

It carries out the reaction Co(I)-[trimethylamine-specific corrinoid protein] + trimethylamine + H(+) = methyl-Co(III)-[trimethylamine-specific corrinoid protein] + dimethylamine. Its pathway is one-carbon metabolism; methanogenesis from trimethylamine. Functionally, catalyzes the transfer of a methyl group from trimethylamine to the corrinoid cofactor of MttC. The protein is Trimethylamine methyltransferase MttB2 (mttB2) of Methanosarcina mazei (strain ATCC BAA-159 / DSM 3647 / Goe1 / Go1 / JCM 11833 / OCM 88) (Methanosarcina frisia).